The primary structure comprises 219 residues: Holliday junction branch migration complex subunit RuvA (219 aa).

Residues 1–66 (MIEYIIGKIS…NFLFEYYGFK (66 aa)) form a domain I region. The segment at 67-148 (TLREKIFFEN…SEYNNDVNHS (82 aa)) is domain II. Residues 149–154 (SINQQS) are flexible linker. The segment at 155–219 (NSYNPVPDLV…EAVTNKTTVS (65 aa)) is domain III.

This sequence belongs to the RuvA family. As to quaternary structure, homotetramer. Forms an RuvA(8)-RuvB(12)-Holliday junction (HJ) complex. HJ DNA is sandwiched between 2 RuvA tetramers; dsDNA enters through RuvA and exits via RuvB. An RuvB hexamer assembles on each DNA strand where it exits the tetramer. Each RuvB hexamer is contacted by two RuvA subunits (via domain III) on 2 adjacent RuvB subunits; this complex drives branch migration. In the full resolvosome a probable DNA-RuvA(4)-RuvB(12)-RuvC(2) complex forms which resolves the HJ.

The protein resides in the cytoplasm. In terms of biological role, the RuvA-RuvB-RuvC complex processes Holliday junction (HJ) DNA during genetic recombination and DNA repair, while the RuvA-RuvB complex plays an important role in the rescue of blocked DNA replication forks via replication fork reversal (RFR). RuvA specifically binds to HJ cruciform DNA, conferring on it an open structure. The RuvB hexamer acts as an ATP-dependent pump, pulling dsDNA into and through the RuvAB complex. HJ branch migration allows RuvC to scan DNA until it finds its consensus sequence, where it cleaves and resolves the cruciform DNA. This is Holliday junction branch migration complex subunit RuvA from Malacoplasma penetrans (strain HF-2) (Mycoplasma penetrans).